An 825-amino-acid polypeptide reads, in one-letter code: Probable inorganic carbon transporter subunit DabA (825 aa).

Residues C334, D336, H521, and C536 each contribute to the Zn(2+) site.

The protein belongs to the inorganic carbon transporter (TC 9.A.2) DabA family. As to quaternary structure, forms a complex with DabB. Zn(2+) serves as cofactor.

The protein resides in the cell inner membrane. Its function is as follows. Part of an energy-coupled inorganic carbon pump. The polypeptide is Probable inorganic carbon transporter subunit DabA (Acidithiobacillus ferrooxidans (strain ATCC 23270 / DSM 14882 / CIP 104768 / NCIMB 8455) (Ferrobacillus ferrooxidans (strain ATCC 23270))).